We begin with the raw amino-acid sequence, 263 residues long: Tryptophan synthase alpha chain (263 aa).

Residues Glu51 and Asp62 each act as proton acceptor in the active site.

The protein belongs to the TrpA family. Tetramer of two alpha and two beta chains.

It catalyses the reaction (1S,2R)-1-C-(indol-3-yl)glycerol 3-phosphate + L-serine = D-glyceraldehyde 3-phosphate + L-tryptophan + H2O. The protein operates within amino-acid biosynthesis; L-tryptophan biosynthesis; L-tryptophan from chorismate: step 5/5. The alpha subunit is responsible for the aldol cleavage of indoleglycerol phosphate to indole and glyceraldehyde 3-phosphate. This Methanosarcina barkeri (strain Fusaro / DSM 804) protein is Tryptophan synthase alpha chain.